Consider the following 286-residue polypeptide: 3-hydroxyanthranilate 3,4-dioxygenase (286 aa).

The interval 1-160 (MERRVRVKSW…SEQYRTGKPN (160 aa)) is domain A (catalytic). Arg43 is a binding site for O2. The Fe cation site is built by His47, Glu53, and His91. Glu53 serves as a coordination point for substrate. Substrate is bound by residues Arg95 and Glu105. The linker stretch occupies residues 161-177 (PDQLLKELPFPLNTRSI). Residues 178–286 (MKPMSLKAWL…QDPARKKPWW (109 aa)) form a domain B region.

The protein belongs to the 3-HAO family. Monomer. Requires Fe(2+) as cofactor.

It localises to the cytoplasm. Its subcellular location is the cytosol. The catalysed reaction is 3-hydroxyanthranilate + O2 = (2Z,4Z)-2-amino-3-carboxymuconate 6-semialdehyde. The protein operates within cofactor biosynthesis; NAD(+) biosynthesis; quinolinate from L-kynurenine: step 3/3. Functionally, catalyzes the oxidative ring opening of 3-hydroxyanthranilate to 2-amino-3-carboxymuconate semialdehyde, which spontaneously cyclizes to quinolinate. This chain is 3-hydroxyanthranilate 3,4-dioxygenase (Haao), found in Mus musculus (Mouse).